The chain runs to 548 residues: pH-responsive protein 1 (548 aa).

The N-terminal stretch at 1-20 (MYSLIKSLATFATLFSLTLA) is a signal peptide. Asn41 carries N-linked (GlcNAc...) asparagine glycosylation. A disulfide bridge links Cys82 with Cys111. Asn173 and Asn261 each carry an N-linked (GlcNAc...) asparagine glycan. Disulfide bonds link Cys224-Cys358, Cys242-Cys273, Cys381-Cys432, Cys390-Cys456, and Cys409-Cys414. The tract at residues 483–518 (GKASSSGGSSKSGSSSASASGSSSSSTSSGSSSSSG) is disordered. A lipid anchor (GPI-anchor amidated serine) is attached at Ser517. Residues 518–548 (GVKATQQMSMVKLVSIITIVTAFVGGMSVVF) constitute a propeptide, removed in mature form.

This sequence belongs to the glycosyl hydrolase 72 family.

It localises to the cell membrane. Required for apical cell growth and plays an essential role in morphogenesis. May be integral to the pathogenic ability of the organism. The protein is pH-responsive protein 1 (PHR1) of Candida albicans (strain SC5314 / ATCC MYA-2876) (Yeast).